Consider the following 94-residue polypeptide: Small ribosomal subunit protein bS6 (94 aa).

It belongs to the bacterial ribosomal protein bS6 family.

Its function is as follows. Binds together with bS18 to 16S ribosomal RNA. The polypeptide is Small ribosomal subunit protein bS6 (Clostridium botulinum (strain Hall / ATCC 3502 / NCTC 13319 / Type A)).